The primary structure comprises 246 residues: tRNA pseudouridine synthase A (246 aa).

D53 acts as the Nucleophile in catalysis. Y111 contacts substrate.

This sequence belongs to the tRNA pseudouridine synthase TruA family. As to quaternary structure, homodimer.

It carries out the reaction uridine(38/39/40) in tRNA = pseudouridine(38/39/40) in tRNA. Its function is as follows. Formation of pseudouridine at positions 38, 39 and 40 in the anticodon stem and loop of transfer RNAs. This chain is tRNA pseudouridine synthase A, found in Lysinibacillus sphaericus (strain C3-41).